The primary structure comprises 259 residues: Zinc import ATP-binding protein ZnuC (259 aa).

The ABC transporter domain maps to 11–225; the sequence is IRLENIYVHR…PEYLAIFGGQ (215 aa). Residue 43–50 participates in ATP binding; the sequence is GPNGAGKS.

This sequence belongs to the ABC transporter superfamily. Zinc importer (TC 3.A.1.15.5) family. The complex is composed of two ATP-binding proteins (ZnuC), two transmembrane proteins (ZnuB) and a solute-binding protein (ZnuA).

It localises to the cell inner membrane. It catalyses the reaction Zn(2+)(out) + ATP(in) + H2O(in) = Zn(2+)(in) + ADP(in) + phosphate(in) + H(+)(in). In terms of biological role, part of the ABC transporter complex ZnuABC involved in zinc import. Responsible for energy coupling to the transport system. This Acinetobacter baylyi (strain ATCC 33305 / BD413 / ADP1) protein is Zinc import ATP-binding protein ZnuC.